Consider the following 215-residue polypeptide: MRQFDRHQGLVAPMDRANVDTDLIIPKQFLKSIKRTGFGPNLFDELRYLDEGYPGQDVAKRPLNPDFVLNQPRYQGASVLLARRNFGCGSSREHAPWALEDFGFRVIIAPSFADIFFNNAFKNGLLLITFDEATVDRLFQEAEAEEGYRLDVDLEKQQVTTPSGEVLTFEVDPFRKHCLLEGLDDIGLTLKDADAIEDFEARHRQARPWLFRQAG.

This sequence belongs to the LeuD family. LeuD type 1 subfamily. In terms of assembly, heterodimer of LeuC and LeuD.

The enzyme catalyses (2R,3S)-3-isopropylmalate = (2S)-2-isopropylmalate. The protein operates within amino-acid biosynthesis; L-leucine biosynthesis; L-leucine from 3-methyl-2-oxobutanoate: step 2/4. In terms of biological role, catalyzes the isomerization between 2-isopropylmalate and 3-isopropylmalate, via the formation of 2-isopropylmaleate. This chain is 3-isopropylmalate dehydratase small subunit, found in Chromohalobacter salexigens (strain ATCC BAA-138 / DSM 3043 / CIP 106854 / NCIMB 13768 / 1H11).